A 337-amino-acid chain; its full sequence is Large ribosomal subunit protein uL3 (337 aa).

Positions 1 to 26 (MTRHHQPRKGSVAFSPRKRVARETPR) are disordered.

The protein belongs to the universal ribosomal protein uL3 family. Part of the 50S ribosomal subunit. Forms a cluster with proteins L14 and L24e.

Functionally, one of the primary rRNA binding proteins, it binds directly near the 3'-end of the 23S rRNA, where it nucleates assembly of the 50S subunit. In Methanosphaera stadtmanae (strain ATCC 43021 / DSM 3091 / JCM 11832 / MCB-3), this protein is Large ribosomal subunit protein uL3.